The chain runs to 437 residues: Ribosomal protein uS12 methylthiotransferase RimO (437 aa).

The region spanning 9 to 124 (TKVNIVTLGC…LPAILKKFRA (116 aa)) is the MTTase N-terminal domain. 6 residues coordinate [4Fe-4S] cluster: C18, C56, C90, C151, C155, and C158. The Radical SAM core domain occupies 137 to 367 (TTPSHYAYVK…MSIQEGISAE (231 aa)). In terms of domain architecture, TRAM spans 370–437 (EKKIGNTYKV…EFDLFGEIVK (68 aa)).

Belongs to the methylthiotransferase family. RimO subfamily. [4Fe-4S] cluster serves as cofactor.

Its subcellular location is the cytoplasm. The enzyme catalyses L-aspartate(89)-[ribosomal protein uS12]-hydrogen + (sulfur carrier)-SH + AH2 + 2 S-adenosyl-L-methionine = 3-methylsulfanyl-L-aspartate(89)-[ribosomal protein uS12]-hydrogen + (sulfur carrier)-H + 5'-deoxyadenosine + L-methionine + A + S-adenosyl-L-homocysteine + 2 H(+). Its function is as follows. Catalyzes the methylthiolation of an aspartic acid residue of ribosomal protein uS12. In Cytophaga hutchinsonii (strain ATCC 33406 / DSM 1761 / CIP 103989 / NBRC 15051 / NCIMB 9469 / D465), this protein is Ribosomal protein uS12 methylthiotransferase RimO.